We begin with the raw amino-acid sequence, 275 residues long: MSACGRKALTLLSSVFAVCGLGLLGIAVSTDYWLYLEEGVIVPQNQSTEIKMSLHSGLWRVCFLAGEERGRCFTIEYVMPMNTQLTSESTVNVLKMIRSATPFPLVSLFFMFIGFILNNIGHIRPHRTILAFVSGIFFILSGLSLVVGLVLYISSINDEMLNRTKDAETYFNYKYGWSFAFAAISFLLTESAGVMSVYLFMKRYTAEDMYRPHPGFYRPRLSNCSDYSGQFLHPDAWVRGRSPSDISSEASLQMNSNYPALLKCPDYDQMSSSPC.

Transmembrane regions (helical) follow at residues 8–28 (ALTL…GIAV), 103–123 (FPLV…IGHI), 129–149 (ILAF…VVGL), and 176–196 (GWSF…GVMS).

It belongs to the PMP-22/EMP/MP20 family. CACNG subfamily. The L-type calcium channel is composed of five subunits: alpha-1, alpha-2/delta, beta and gamma. Acts as an auxiliary subunit for AMPA-selective glutamate receptors (AMPARs). Found in a complex with GRIA1, GRIA2, GRIA3, GRIA4, CNIH2, CNIH3, CACNG2, CACNG3, CACNG4, CACNG7 and CACNG8. Interacts with GRIA1, GRIA2, GRIA3 and GRIA4.

The protein localises to the membrane. It is found in the postsynaptic density membrane. In terms of biological role, regulates the gating properties of AMPA-selective glutamate receptors (AMPARs). Modulates their gating properties by accelerating their rates of activation, deactivation and desensitization. Displays subunit-specific AMPA receptor regulation. Shows specificity for GRIA1, GRIA4 and the long isoform of GRIA2. Thought to stabilize the calcium channel in an inactivated (closed) state. The sequence is that of Voltage-dependent calcium channel gamma-5 subunit (CACNG5) from Homo sapiens (Human).